Reading from the N-terminus, the 681-residue chain is SRSF protein kinase 2 (681 aa).

Residues 1–63 form a disordered region; the sequence is MSVNSEKSSS…EQEDPADYCK (63 aa). The segment covering 22–41 has biased composition (pro residues); that stretch reads LVPPPPPPPPPPPLPDPAPP. The segment covering 42–59 has biased composition (acidic residues); the sequence is EPEEEILGSDDEEQEDPA. S50 carries the phosphoserine modification. The region spanning 79–681 is the Protein kinase domain; sequence YHVIRKLGWG…ECLRHPWLNS (603 aa). Residues 85 to 93 and K108 each bind ATP; that span reads LGWGHFSTV. D212 acts as the Proton acceptor in catalysis. Disordered regions lie at residues 237–270, 302–452, and 467–499; these read WQKAGAPPPSGSAVSTAPQQKPIGKISKNKKKKL, ENIT…PLFS, and GSPLTEQEESSPSHDRSRTVSASSTGDLPKTKT. Residues T331 and T332 each carry the phosphothreonine modification. Residue S378 is modified to Phosphoserine. The segment covering 395 to 419 has biased composition (acidic residues); sequence QLEDEEDDEDDCANPEEYNLDEPNA. Residues 421–431 are compositionally biased toward polar residues; the sequence is SDYTYSSSYEQ. S468 bears the Phosphoserine mark. Phosphothreonine is present on T471. A phosphoserine mark is found at S477, S479, and S483. T485 carries the phosphothreonine; by PKB/AKT1 modification. Residues S487 and S490 each carry the phosphoserine modification. At S581 the chain carries Phosphoserine; by CK2.

The protein belongs to the protein kinase superfamily. CMGC Ser/Thr protein kinase family. As to quaternary structure, associates with U4/U6-U5 tri-small nuclear ribonucleoproteins (U4/U6-U5 tri-snRNPs). Interacts with PKB/AKT1 in a phosphorylation-dependent manner. The phosphorylated form (by PKB/AKT1) interacts with YWHAB and YWHAE. Interaction with YWHAB suppresses its cleavage by caspases and inhibits the release of its N-terminal pro-apoptotic fragment. Interacts with SFN. Interacts with ACIN1. Interacts with POLR2A/RNA polymerase II; the interaction occurs during the co-transcriptional formation of inappropriate R-loops. Mg(2+) serves as cofactor. Post-translationally, phosphorylation at Thr-485 by PKB/AKT1 enhances its stimulatory activity in triggering cyclin-D1 (CCND1) expression and promoting apoptosis in neurons, which can be blocked by YWHAB. It also enhances its protein kinase activity toward ACIN1 and SRSF2, promotes its nuclear translocation and prevents its proteolytic cleavage. Proteolytically cleaved at Asp-137 and Asp-401 by caspase-3 during apoptotic cell death. Cleavage at Asp-137 which is the major site of cleavage, produces a small N-terminal fragment that translocates into nucleus and promotes VP16-induced apoptosis. As to expression, expressed in testes, lung and brain.

Its subcellular location is the cytoplasm. It is found in the nucleus. The protein localises to the nucleoplasm. It localises to the nucleus speckle. The protein resides in the chromosome. The catalysed reaction is L-seryl-[protein] + ATP = O-phospho-L-seryl-[protein] + ADP + H(+). The enzyme catalyses L-threonyl-[protein] + ATP = O-phospho-L-threonyl-[protein] + ADP + H(+). Its activity is regulated as follows. Activated by phosphorylation on Ser-50 and Ser-581. Functionally, serine/arginine-rich protein-specific kinase which specifically phosphorylates its substrates at serine residues located in regions rich in arginine/serine dipeptides, known as RS domains and is involved in the phosphorylation of SR splicing factors and the regulation of splicing. Promotes neuronal apoptosis by up-regulating cyclin-D1 (CCND1) expression. This is done by the phosphorylation of SRSF2, leading to the suppression of p53/TP53 phosphorylation thereby relieving the repressive effect of p53/TP53 on cyclin-D1 (CCND1) expression. Phosphorylates ACIN1, and redistributes it from the nuclear speckles to the nucleoplasm, resulting in cyclin A1 but not cyclin A2 up-regulation. Plays an essential role in spliceosomal B complex formation via the phosphorylation of DDX23/PRP28. Probably by phosphorylating DDX23, leads to the suppression of incorrect R-loops formed during transcription; R-loops are composed of a DNA:RNA hybrid and the associated non-template single-stranded DNA. This is SRSF protein kinase 2 from Mus musculus (Mouse).